A 234-amino-acid chain; its full sequence is Covalently-linked cell wall protein 14 (234 aa).

An N-terminal signal peptide occupies residues 1 to 22 (MASFLKISTLIAIVSTLQTTLA). The CFEM domain occupies 23 to 109 (APPACLLACV…SSEESSASAS (87 aa)). Cystine bridges form between cysteine 27–cysteine 66, cysteine 31–cysteine 61, cysteine 41–cysteine 49, and cysteine 51–cysteine 82. Residue aspartate 46 coordinates heme. Low complexity predominate over residues 86 to 207 (SSQSSSSESE…ASSSESTTAT (122 aa)). The tract at residues 86-208 (SSQSSSSESE…SSSESTTATG (123 aa)) is disordered. Glycine 215 carries GPI-anchor amidated glycine lipidation. A propeptide spans 216–234 (SAAKVGLGALVGLVGAVLL) (removed in mature form).

Belongs to the CCW14 family. Post-translationally, the GPI-anchor is attached to the protein in the endoplasmic reticulum and serves to target the protein to the cell surface. There, the glucosamine-inositol phospholipid moiety is cleaved off and the GPI-modified mannoprotein is covalently attached via its lipidless GPI glycan remnant to the 1,6-beta-glucan of the outer cell wall layer.

Its subcellular location is the secreted. It localises to the cell wall. It is found in the membrane. Beta-glucan associated cell wall protein involved in cell wall structure. May serve as cross-linking or coat-forming wall protein. In Candida albicans (strain SC5314 / ATCC MYA-2876) (Yeast), this protein is Covalently-linked cell wall protein 14 (SSR1).